The sequence spans 766 residues: Phosphoribosylformylglycinamidine synthase subunit PurL (766 aa).

His66 is an active-site residue. Residues Tyr69 and Lys113 each contribute to the ATP site. Residue Glu115 coordinates Mg(2+). Substrate contacts are provided by residues 116–119 (SHNH) and Arg138. His117 (proton acceptor) is an active-site residue. Residue Asp139 participates in Mg(2+) binding. Gln264 provides a ligand contact to substrate. Asp292 provides a ligand contact to Mg(2+). Residue 336 to 338 (ESQ) participates in substrate binding. Positions 524 and 561 each coordinate ATP. Asn562 is a binding site for Mg(2+). Ser564 is a binding site for substrate.

Belongs to the FGAMS family. Monomer. Part of the FGAM synthase complex composed of 1 PurL, 1 PurQ and 2 PurS subunits.

The protein resides in the cytoplasm. It catalyses the reaction N(2)-formyl-N(1)-(5-phospho-beta-D-ribosyl)glycinamide + L-glutamine + ATP + H2O = 2-formamido-N(1)-(5-O-phospho-beta-D-ribosyl)acetamidine + L-glutamate + ADP + phosphate + H(+). It participates in purine metabolism; IMP biosynthesis via de novo pathway; 5-amino-1-(5-phospho-D-ribosyl)imidazole from N(2)-formyl-N(1)-(5-phospho-D-ribosyl)glycinamide: step 1/2. In terms of biological role, part of the phosphoribosylformylglycinamidine synthase complex involved in the purines biosynthetic pathway. Catalyzes the ATP-dependent conversion of formylglycinamide ribonucleotide (FGAR) and glutamine to yield formylglycinamidine ribonucleotide (FGAM) and glutamate. The FGAM synthase complex is composed of three subunits. PurQ produces an ammonia molecule by converting glutamine to glutamate. PurL transfers the ammonia molecule to FGAR to form FGAM in an ATP-dependent manner. PurS interacts with PurQ and PurL and is thought to assist in the transfer of the ammonia molecule from PurQ to PurL. The chain is Phosphoribosylformylglycinamidine synthase subunit PurL from Mycobacterium tuberculosis (strain CDC 1551 / Oshkosh).